A 54-amino-acid chain; its full sequence is Large ribosomal subunit protein bL32c (54 aa).

This sequence belongs to the bacterial ribosomal protein bL32 family.

The protein resides in the plastid. Its subcellular location is the chloroplast. This Helianthus annuus (Common sunflower) protein is Large ribosomal subunit protein bL32c.